We begin with the raw amino-acid sequence, 255 residues long: Phosphate import ATP-binding protein PstB (255 aa).

One can recognise an ABC transporter domain in the interval Met-9–Ile-250. Gly-41 to Ser-48 contacts ATP.

This sequence belongs to the ABC transporter superfamily. Phosphate importer (TC 3.A.1.7) family. The complex is composed of two ATP-binding proteins (PstB), two transmembrane proteins (PstC and PstA) and a solute-binding protein (PstS).

It is found in the cell inner membrane. The enzyme catalyses phosphate(out) + ATP + H2O = ADP + 2 phosphate(in) + H(+). In terms of biological role, part of the ABC transporter complex PstSACB involved in phosphate import. Responsible for energy coupling to the transport system. In Nitratidesulfovibrio vulgaris (strain ATCC 29579 / DSM 644 / CCUG 34227 / NCIMB 8303 / VKM B-1760 / Hildenborough) (Desulfovibrio vulgaris), this protein is Phosphate import ATP-binding protein PstB.